Reading from the N-terminus, the 363-residue chain is MKFIDEAKIYIKAGDGGNGAATFRREKYIPMGGPNGGDGGRGGSIYAVADRNINTLVDYRYTRKFIGKRGENGGGADQYGAGGDDIILRMPVGTVIYNLNTEEIIADLSEHDQKVMIAKGGKGGLGNIHFKSSTNRAPRQKTNGEQGEELELRLELRVLADVGLLGLPNAGKSTLIRAISSARPKVADYPFTTLHPNLGVVRVDDEKSFVMADVPGLIEGAADGAGLGIRFLKHLQRTRILLHLVDIAPIDPDSDPVRDAKAIVGELIKHDPDLANKPRWLVLNKLDLIPEEDREAAVKNFIKAYKKATKYDGPVFPIAAINGEGTKPLIYAISEALEQMARPEIGDLDDNDEDSDEIIRDTE.

Residues 1-159 form the Obg domain; that stretch reads MKFIDEAKIY…LELRLELRVL (159 aa). One can recognise an OBG-type G domain in the interval 160-338; it reads ADVGLLGLPN…LIYAISEALE (179 aa). GTP contacts are provided by residues 166 to 173, 191 to 195, 213 to 216, 284 to 287, and 319 to 321; these read GLPNAGKS, FTTLH, DVPG, NKLD, and AAI. The Mg(2+) site is built by serine 173 and threonine 193. The disordered stretch occupies residues 342 to 363; sequence RPEIGDLDDNDEDSDEIIRDTE. Residues 346–356 show a composition bias toward acidic residues; that stretch reads GDLDDNDEDSD.

The protein belongs to the TRAFAC class OBG-HflX-like GTPase superfamily. OBG GTPase family. Monomer. The cofactor is Mg(2+).

It is found in the cytoplasm. In terms of biological role, an essential GTPase which binds GTP, GDP and possibly (p)ppGpp with moderate affinity, with high nucleotide exchange rates and a fairly low GTP hydrolysis rate. Plays a role in control of the cell cycle, stress response, ribosome biogenesis and in those bacteria that undergo differentiation, in morphogenesis control. This chain is GTPase Obg, found in Dechloromonas aromatica (strain RCB).